The primary structure comprises 146 residues: METIFDYNQIKQIIPHRQPFLLIDKVVEYEEGQRCVAIKQVSGNEPFFQGHFPEYAVMPGVLITEALAQTGAVAILNSEENKGKIALFAGIDKCRFKRQVVPGDTLTLEVEITKIKGPIGKGNAKATVDGQLACSCELTFAIQDVK.

Residue His51 is part of the active site.

The protein belongs to the thioester dehydratase family. FabZ subfamily.

It is found in the cytoplasm. The enzyme catalyses a (3R)-hydroxyacyl-[ACP] = a (2E)-enoyl-[ACP] + H2O. In terms of biological role, involved in unsaturated fatty acids biosynthesis. Catalyzes the dehydration of short chain beta-hydroxyacyl-ACPs and long chain saturated and unsaturated beta-hydroxyacyl-ACPs. The chain is 3-hydroxyacyl-[acyl-carrier-protein] dehydratase FabZ from Staphylococcus aureus (strain Mu3 / ATCC 700698).